A 311-amino-acid polypeptide reads, in one-letter code: tRNA-cytidine(32) 2-sulfurtransferase (311 aa).

A PP-loop motif motif is present at residues 47 to 52; that stretch reads SGGKDS. Cysteine 122, cysteine 125, and cysteine 213 together coordinate [4Fe-4S] cluster.

The protein belongs to the TtcA family. As to quaternary structure, homodimer. It depends on Mg(2+) as a cofactor. [4Fe-4S] cluster serves as cofactor.

It is found in the cytoplasm. It carries out the reaction cytidine(32) in tRNA + S-sulfanyl-L-cysteinyl-[cysteine desulfurase] + AH2 + ATP = 2-thiocytidine(32) in tRNA + L-cysteinyl-[cysteine desulfurase] + A + AMP + diphosphate + H(+). It participates in tRNA modification. Its function is as follows. Catalyzes the ATP-dependent 2-thiolation of cytidine in position 32 of tRNA, to form 2-thiocytidine (s(2)C32). The sulfur atoms are provided by the cysteine/cysteine desulfurase (IscS) system. This Shigella boydii serotype 18 (strain CDC 3083-94 / BS512) protein is tRNA-cytidine(32) 2-sulfurtransferase.